A 359-amino-acid chain; its full sequence is 3-dehydroquinate synthase (359 aa).

Residues 71–76 (DGEAYK), 105–109 (GVIGD), 129–130 (TT), lysine 142, and lysine 151 contribute to the NAD(+) site. Zn(2+) is bound by residues glutamate 184, histidine 247, and histidine 264.

The protein belongs to the sugar phosphate cyclases superfamily. Dehydroquinate synthase family. Requires Co(2+) as cofactor. Zn(2+) is required as a cofactor. The cofactor is NAD(+).

It is found in the cytoplasm. The enzyme catalyses 7-phospho-2-dehydro-3-deoxy-D-arabino-heptonate = 3-dehydroquinate + phosphate. It functions in the pathway metabolic intermediate biosynthesis; chorismate biosynthesis; chorismate from D-erythrose 4-phosphate and phosphoenolpyruvate: step 2/7. Its function is as follows. Catalyzes the conversion of 3-deoxy-D-arabino-heptulosonate 7-phosphate (DAHP) to dehydroquinate (DHQ). This is 3-dehydroquinate synthase from Burkholderia ambifaria (strain ATCC BAA-244 / DSM 16087 / CCUG 44356 / LMG 19182 / AMMD) (Burkholderia cepacia (strain AMMD)).